A 149-amino-acid chain; its full sequence is Thioredoxin-like protein 4B (149 aa).

The protein belongs to the DIM1 family. Homodimer. Interacts with the U5-102 kDa protein subunit of the spliceosome.

The protein resides in the nucleus. Its function is as follows. Essential role in pre-mRNA splicing. Required in cell cycle progression for S/G(2) transition. The chain is Thioredoxin-like protein 4B (TXNL4B) from Homo sapiens (Human).